The primary structure comprises 486 residues: MTIQHKQDLAQIRAMVPEMRRVKSIHFIGIGGAGMSGIAEVLLNEGYQITGSDIAENAVTERLAQKGAKVYIGHQATNVAEASVVVVSTAINEANPEVKAAREARIPVVRRAEMLAELMRFRHGIAVAGTHGKTTTTALVTQIYSEAGLDPTFVNGGLVKSAGTNARLGSSRILIAEADESDASFLHLQPMVCIVTNIEADHMDTYGGDFETLKQTFIDFLHNLPFYGQAIVCIDDPVIRELIPRISRQVITYGFSEDADVRIENYRQEGQQGKFTVVRKDCEALDITLNIPGRHNALNAAAAIAVATEDEIGDDAILAAMVGTQGTGRRFEHLGEFETGNGNVMLVDDYGHHPTEVDVTIQAARNGWQEKRLVMIFQPHRYSRTRDLYDDFANVLEQVDVLVMLDVYAAGEKAIAGADSRSLCRTIRSRGKIDPIFVADTQQLPEVLANILQEGDLLLAQGAGDIGKVARQLAALELNISNMKAK.

129–135 contributes to the ATP binding site; the sequence is GTHGKTT.

This sequence belongs to the MurCDEF family.

It is found in the cytoplasm. It catalyses the reaction UDP-N-acetyl-alpha-D-muramate + L-alanine + ATP = UDP-N-acetyl-alpha-D-muramoyl-L-alanine + ADP + phosphate + H(+). It participates in cell wall biogenesis; peptidoglycan biosynthesis. In terms of biological role, cell wall formation. The chain is UDP-N-acetylmuramate--L-alanine ligase from Vibrio vulnificus (strain CMCP6).